An 804-amino-acid polypeptide reads, in one-letter code: Phenylalanine--tRNA ligase beta subunit (804 aa).

One can recognise a tRNA-binding domain in the interval 38-148; it reads RAAFRAFTIA…ENAPVGTSFA (111 aa). In terms of domain architecture, B5 spans 401-476; that stretch reads HTARVIDFPV…RIHGINRIDP (76 aa). Residues Asp-454, Asp-460, Glu-463, and Glu-464 each coordinate Mg(2+). An FDX-ACB domain is found at 710-803; the sequence is SLFQSLKRDY…VAKQTGGVLR (94 aa).

Belongs to the phenylalanyl-tRNA synthetase beta subunit family. Type 1 subfamily. In terms of assembly, tetramer of two alpha and two beta subunits. Requires Mg(2+) as cofactor.

It is found in the cytoplasm. It catalyses the reaction tRNA(Phe) + L-phenylalanine + ATP = L-phenylalanyl-tRNA(Phe) + AMP + diphosphate + H(+). The protein is Phenylalanine--tRNA ligase beta subunit of Brucella suis biovar 1 (strain 1330).